The following is a 388-amino-acid chain: Mannitol-1-phosphate 5-dehydrogenase (388 aa).

5 to 16 (AVHFGGGNIGRG) provides a ligand contact to NAD(+). Lysine 213 is a catalytic residue.

It belongs to the mannitol dehydrogenase family. In terms of assembly, monomer.

It carries out the reaction D-mannitol 1-phosphate + NAD(+) = beta-D-fructose 6-phosphate + NADH + H(+). Its function is as follows. Catalyzes the NAD(H)-dependent interconversion of D-fructose 6-phosphate and D-mannitol 1-phosphate in the mannitol metabolic pathway. The chain is Mannitol-1-phosphate 5-dehydrogenase from Coccidioides immitis (strain RS) (Valley fever fungus).